The following is a 127-amino-acid chain: MARIAGIDLPPNKRAVISLQYIYGIGNKSAQDIIAAAGIDPTTRTKDLTEEQARKIREIIEASYKVEGDLRREVTMNIKRLMDLGCYRGLRHRKGLPVRGQRTHTNARTRKGPKRGIVRAKPAAPAR.

The segment covering 96–118 (LPVRGQRTHTNARTRKGPKRGIV) has biased composition (basic residues). The disordered stretch occupies residues 96–127 (LPVRGQRTHTNARTRKGPKRGIVRAKPAAPAR).

The protein belongs to the universal ribosomal protein uS13 family. Part of the 30S ribosomal subunit. Forms a loose heterodimer with protein S19. Forms two bridges to the 50S subunit in the 70S ribosome.

Its function is as follows. Located at the top of the head of the 30S subunit, it contacts several helices of the 16S rRNA. In the 70S ribosome it contacts the 23S rRNA (bridge B1a) and protein L5 of the 50S subunit (bridge B1b), connecting the 2 subunits; these bridges are implicated in subunit movement. Contacts the tRNAs in the A and P-sites. In Myxococcus xanthus (strain DK1622), this protein is Small ribosomal subunit protein uS13.